Here is a 66-residue protein sequence, read N- to C-terminus: Photosystem II reaction center protein J (66 aa).

The helical transmembrane segment at 36-56 (LWLVATAGGIAVIFVLGIFFY) threads the bilayer.

It belongs to the PsbJ family. In terms of assembly, PSII is composed of 1 copy each of membrane proteins PsbA, PsbB, PsbC, PsbD, PsbE, PsbF, PsbH, PsbI, PsbJ, PsbK, PsbL, PsbM, PsbT, PsbX, PsbY, Psb30/Ycf12, peripheral proteins PsbO, CyanoQ (PsbQ), PsbU, PsbV and a large number of cofactors. It forms dimeric complexes.

The protein resides in the cellular thylakoid membrane. Functionally, one of the components of the core complex of photosystem II (PSII). PSII is a light-driven water:plastoquinone oxidoreductase that uses light energy to abstract electrons from H(2)O, generating O(2) and a proton gradient subsequently used for ATP formation. It consists of a core antenna complex that captures photons, and an electron transfer chain that converts photonic excitation into a charge separation. This chain is Photosystem II reaction center protein J, found in Prochlorococcus marinus (strain MIT 9215).